A 527-amino-acid chain; its full sequence is Putative ribose/galactose/methyl galactoside import ATP-binding protein 2 (527 aa).

The disordered stretch occupies residues 1 to 31 (MFTARVARPMAGDDAPAASSGSTGSSAPPAS). Residues 12–31 (GDDAPAASSGSTGSSAPPAS) show a composition bias toward low complexity. 2 ABC transporter domains span residues 38–274 (LEVR…VGRE) and 284–523 (VPIG…RIMD). 70–77 (GENGAGKS) contacts ATP.

It belongs to the ABC transporter superfamily. Carbohydrate importer 2 (CUT2) (TC 3.A.1.2) family.

The protein resides in the cell inner membrane. It catalyses the reaction D-ribose(out) + ATP + H2O = D-ribose(in) + ADP + phosphate + H(+). The enzyme catalyses D-galactose(out) + ATP + H2O = D-galactose(in) + ADP + phosphate + H(+). Its function is as follows. Part of an ABC transporter complex involved in carbohydrate import. Could be involved in ribose, galactose and/or methyl galactoside import. Responsible for energy coupling to the transport system. The protein is Putative ribose/galactose/methyl galactoside import ATP-binding protein 2 of Burkholderia lata (strain ATCC 17760 / DSM 23089 / LMG 22485 / NCIMB 9086 / R18194 / 383).